We begin with the raw amino-acid sequence, 274 residues long: uncharacterized protein (274 aa).

This is an uncharacterized protein from Invertebrate iridescent virus 6 (IIV-6).